The sequence spans 172 residues: MSSKRAKTKTTKKRPQRATSNVFAMFDQSQIQEFKEAFNMIDQNRDGFIDKEDLHDMLASLGKNPTDEYLDAMMNEAPGPINFTMFLTMFGEKLNGTDPEDVIRNAFACFDEEATGFIQEDYLRELLTTMGDRFTDEEVDELYREAPIDKKGNFNYIEFTRILKHGAKDKDD.

At serine 2 the chain carries N-acetylserine. Threonine 19 is subject to Phosphothreonine; by MLCK. Residue serine 20 is modified to Phosphoserine; by MLCK. EF-hand domains follow at residues 29 to 64, 98 to 133, and 134 to 169; these read SQIQ…LGKN, DPED…MGDR, and FTDE…GAKD. 4 residues coordinate Ca(2+): aspartate 42, asparagine 44, aspartate 46, and aspartate 53.

In terms of assembly, myosin is a hexamer of 2 heavy chains and 4 light chains. Phosphorylation increases the actin-activated myosin ATPase activity and thereby regulates the contractile activity.

Myosin regulatory subunit that plays an important role in regulation of both smooth muscle and nonmuscle cell contractile activity. Implicated in cytokinesis, receptor capping, and cell locomotion. In Gallus gallus (Chicken), this protein is Myosin regulatory light chain 2, smooth muscle minor isoform.